The chain runs to 58 residues: Curromycin resistance protein (58 aa).

The segment at 1-37 (MSVVALGATSITPPHGPESQGRPFPARGPVRPSARAR) is disordered. Positions 25–37 (PARGPVRPSARAR) are enriched in low complexity.

The polypeptide is Curromycin resistance protein (cre) (Streptomyces hygroscopicus).